Here is a 209-residue protein sequence, read N- to C-terminus: Uracil phosphoribosyltransferase (209 aa).

5-phospho-alpha-D-ribose 1-diphosphate-binding positions include R79, R104, and 131–139 (DPLLATGNS). Residues I194 and 199 to 201 (GDA) each bind uracil. Position 200 (D200) interacts with 5-phospho-alpha-D-ribose 1-diphosphate.

It belongs to the UPRTase family. Mg(2+) serves as cofactor.

The enzyme catalyses UMP + diphosphate = 5-phospho-alpha-D-ribose 1-diphosphate + uracil. It functions in the pathway pyrimidine metabolism; UMP biosynthesis via salvage pathway; UMP from uracil: step 1/1. Allosterically activated by GTP. Its function is as follows. Catalyzes the conversion of uracil and 5-phospho-alpha-D-ribose 1-diphosphate (PRPP) to UMP and diphosphate. This chain is Uracil phosphoribosyltransferase, found in Rhodococcus opacus (strain B4).